We begin with the raw amino-acid sequence, 885 residues long: DNA replication licensing factor REC (885 aa).

Positions 36-76 are disordered; sequence RVIPAGGNRQPNQGEPGAPDAPSVPPATRQPRGWSRTAGKR. A C4-type zinc finger spans residues 281–308; it reads CSRCQMEIAMRQRGTFQPRPYQCKRSEC. Positions 430–627 constitute an MCM domain; the sequence is SFKLLVQSIA…ERDMSLTAHV (198 aa). 473 to 480 is an ATP binding site; it reads GDPGIGKT. The segment covering 796-805 has biased composition (polar residues); it reads SLKEGSSRQG. Residues 796-818 are disordered; the sequence is SLKEGSSRQGTRGGGGAGGGAGK. Over residues 806–817 the composition is skewed to gly residues; that stretch reads TRGGGGAGGGAG.

The protein belongs to the MCM family.

Its subcellular location is the nucleus. In terms of biological role, required for meiotic DNA recombination in females. Probably not involved in DNA repair and recombination in somatic cells. This is DNA replication licensing factor REC (rec) from Drosophila melanogaster (Fruit fly).